Reading from the N-terminus, the 175-residue chain is Large ribosomal subunit protein uL10 (175 aa).

Belongs to the universal ribosomal protein uL10 family. As to quaternary structure, part of the ribosomal stalk of the 50S ribosomal subunit. The N-terminus interacts with L11 and the large rRNA to form the base of the stalk. The C-terminus forms an elongated spine to which L12 dimers bind in a sequential fashion forming a multimeric L10(L12)X complex.

In terms of biological role, forms part of the ribosomal stalk, playing a central role in the interaction of the ribosome with GTP-bound translation factors. The sequence is that of Large ribosomal subunit protein uL10 from Cupriavidus taiwanensis (strain DSM 17343 / BCRC 17206 / CCUG 44338 / CIP 107171 / LMG 19424 / R1) (Ralstonia taiwanensis (strain LMG 19424)).